The sequence spans 151 residues: 3-hydroxyacyl-[acyl-carrier-protein] dehydratase FabZ (151 aa).

Residue His56 is part of the active site.

Belongs to the thioester dehydratase family. FabZ subfamily.

Its subcellular location is the cytoplasm. It catalyses the reaction a (3R)-hydroxyacyl-[ACP] = a (2E)-enoyl-[ACP] + H2O. In terms of biological role, involved in unsaturated fatty acids biosynthesis. Catalyzes the dehydration of short chain beta-hydroxyacyl-ACPs and long chain saturated and unsaturated beta-hydroxyacyl-ACPs. In Nitrobacter hamburgensis (strain DSM 10229 / NCIMB 13809 / X14), this protein is 3-hydroxyacyl-[acyl-carrier-protein] dehydratase FabZ.